The following is a 497-amino-acid chain: Signal recognition particle subunit SRP54 1 (497 aa).

The segment at 1–295 is G-domain; the sequence is MVLAQLGGSI…DVKPFVSRLL (295 aa). GTP is bound by residues 108 to 115, 190 to 194, and 248 to 251; these read GLQGSGKT, DTSGR, and TKLD. The M-domain stretch occupies residues 296–497; it reads GMGDLSGLMD…MLGGMGLGGD (202 aa).

This sequence belongs to the GTP-binding SRP family. SRP54 subfamily. Component of a signal recognition particle (SRP) complex that consists of a 7SL RNA molecule of 300 nucleotides and six protein subunits: SRP72, SRP68, SRP54, SRP19, SRP14 and SRP9.

The protein localises to the cytoplasm. It is found in the endoplasmic reticulum. It carries out the reaction GTP + H2O = GDP + phosphate + H(+). Its function is as follows. Component of the signal recognition particle (SRP) complex, a ribonucleoprotein complex that mediates the cotranslational targeting of secretory and membrane proteins to the endoplasmic reticulum (ER). As part of the SRP complex, associates with the SRP receptor (SR) component SRPRA to target secretory proteins to the endoplasmic reticulum membrane. Binds to the signal sequence of presecretory proteins when they emerge from the ribosomes. Displays basal GTPase activity, and stimulates reciprocal GTPase activation of the SR subunit SRPRA. Forms a guanosine 5'-triphosphate (GTP)-dependent complex with the SR subunit SRPRA. SR compaction and GTPase mediated rearrangement of SR drive SRP-mediated cotranslational protein translocation into the ER. Requires the presence of SRP9/SRP14 and/or SRP19 to stably interact with RNA. The polypeptide is Signal recognition particle subunit SRP54 1 (SRP54-1) (Hordeum vulgare (Barley)).